The chain runs to 259 residues: Polycomb group RING finger protein 1 (259 aa).

The residue at position 2 (alanine 2) is an N-acetylalanine. Serine 3 carries the phosphoserine modification. Lysine 24 participates in a covalent cross-link: Glycyl lysine isopeptide (Lys-Gly) (interchain with G-Cter in SUMO2). The RING-type zinc-finger motif lies at 47 to 86; sequence CCLCAGYFVDATTITECLHTFCKSCIVKYLQTSKYCPMCN. A necessary for repressor activity region spans residues 86 to 247; it reads NIKIHETQPL…LSRWFGKPSP (162 aa). Residue lysine 88 forms a Glycyl lysine isopeptide (Lys-Gly) (interchain with G-Cter in SUMO2) linkage. The required for the interaction with the KDM2B-SKP1 heterodimeric complex stretch occupies residues 150-255; the sequence is LPFSSFDHSK…SPLLLQYSVK (106 aa). Residues 167-255 are RING-finger and WD40-associated ubiquitin-like domain (RAWUL); sufficient for interaction with BCOR and BCORL1; it reads EQLSLCLERL…SPLLLQYSVK (89 aa).

In terms of assembly, interacts with BCORL1, forming heterodimers. The PCGF1-BCORL1 heterodimeric complex interacts with the KDM2B-SKP1 heterodimeric complex to form a homotetrameric polycomb repression complex 1 (PRC1.1). Component of the repressive BCOR complex containing a Polycomb group subcomplex at least composed of RYBP, RING1 and RNF2/RING2. Specifically interacts with BCOR, RING1 and RNF2/RING2. Component of a PRC1-like complex. Interacts with CBX6, CBX7 and CBX8. Interacts with DPPA4, NANOG, POU5F1 and RYBP.

It localises to the nucleus. In terms of biological role, component of the Polycomb group (PcG) multiprotein BCOR complex, a complex required to maintain the transcriptionally repressive state of some genes, such as BCL6 and the cyclin-dependent kinase inhibitor, CDKN1A. Transcriptional repressor that may be targeted to the DNA by BCL6; this transcription repressor activity may be related to PKC signaling pathway. Represses CDKN1A expression by binding to its promoter, and this repression is dependent on the retinoic acid response element (RARE element). Promotes cell cycle progression and enhances cell proliferation as well. May have a positive role in tumor cell growth by down-regulating CDKN1A. Component of a Polycomb group (PcG) multiprotein PRC1-like complex, a complex class required to maintain the transcriptionally repressive state of many genes, including Hox genes, throughout development. PcG PRC1 complex acts via chromatin remodeling and modification of histones; it mediates monoubiquitination of histone H2A 'Lys-119', rendering chromatin heritably changed in its expressibility. Within the PRC1-like complex, regulates RNF2 ubiquitin ligase activity. Regulates the expression of DPPA4 and NANOG in the NT2 embryonic carcinoma cells. This chain is Polycomb group RING finger protein 1 (Pcgf1), found in Mus musculus (Mouse).